The sequence spans 373 residues: Erythronate-4-phosphate dehydrogenase (373 aa).

The substrate site is built by Ser45 and Thr67. NAD(+) is bound by residues Asp147, 206 to 208, and Asp232; that span reads ASR. The active site involves Arg208. Residue Glu237 is part of the active site. The Proton donor role is filled by His254. Residue Gly257 coordinates NAD(+). Tyr258 is a binding site for substrate.

It belongs to the D-isomer specific 2-hydroxyacid dehydrogenase family. PdxB subfamily. Homodimer.

The protein resides in the cytoplasm. The catalysed reaction is 4-phospho-D-erythronate + NAD(+) = (R)-3-hydroxy-2-oxo-4-phosphooxybutanoate + NADH + H(+). Its pathway is cofactor biosynthesis; pyridoxine 5'-phosphate biosynthesis; pyridoxine 5'-phosphate from D-erythrose 4-phosphate: step 2/5. Catalyzes the oxidation of erythronate-4-phosphate to 3-hydroxy-2-oxo-4-phosphonooxybutanoate. The sequence is that of Erythronate-4-phosphate dehydrogenase from Tolumonas auensis (strain DSM 9187 / NBRC 110442 / TA 4).